Reading from the N-terminus, the 287-residue chain is Probable aquaporin PIP1-5 (287 aa).

Position 1 is an N-acetylmethionine (Met-1). Residues Met-1–Glu-34 are disordered. Over Met-1–Gly-55 the chain is Cytoplasmic. The helical transmembrane segment at Ile-56–Val-76 threads the bilayer. Residues Lys-77–Ala-92 lie on the Extracellular side of the membrane. A helical transmembrane segment spans residues Trp-93–His-113. Residues Ile-114–Ala-133 lie on the Cytoplasmic side of the membrane. Positions Asn-115–Ala-117 match the NPA 1 motif. The chain crosses the membrane as a helical span at residues Leu-134–Phe-154. The Extracellular portion of the chain corresponds to Gln-155–Lys-175. Residues Gly-176–Ala-196 form a helical membrane-spanning segment. Residues Thr-197–Pro-209 are Cytoplasmic-facing. Residues Ile-210–Ile-230 traverse the membrane as a helical segment. At Thr-231 to Trp-257 the chain is on the extracellular side. An NPA 2 motif is present at residues Asn-236–Ala-238. The chain crosses the membrane as a helical span at residues Ile-258 to Ile-278. Over Arg-279–Thr-287 the chain is Cytoplasmic. Ser-285 carries the post-translational modification Phosphoserine.

Belongs to the MIP/aquaporin (TC 1.A.8) family. PIP (TC 1.A.8.11) subfamily. As to expression, predominantly expressed in green siliques. Also expressed above ground, in roots and flower buds.

Its subcellular location is the cell membrane. In terms of biological role, aquaporins facilitate the transport of water and small neutral solutes across cell membranes. This is Probable aquaporin PIP1-5 (PIP1-5) from Arabidopsis thaliana (Mouse-ear cress).